Reading from the N-terminus, the 623-residue chain is E3 ubiquitin-protein ligase DTX1 (623 aa).

WWE domains are found at residues 13–93 (HNFG…PVRR) and 94–170 (NFFE…RLRR). The interval 224–319 (KVPSGPPPAL…RASIPPGVPA (96 aa)) is disordered. The segment covering 227–242 (SGPPPALPPPPPPPIH) has biased composition (pro residues). The segment covering 292 to 311 (GQNNLNRPGEQRTSGSSSRA) has biased composition (polar residues). Residues 413–474 (CTICMERLVT…DGSLQCPTCK (62 aa)) form an RING-type zinc finger.

Belongs to the Deltex family. In terms of assembly, may form a homo- or heterodimer with other members of the Deltex family. Probably interacts with Notch1. Specifically expressed in regions undergoing neuronal differentiation. Mainly colocalizes with Notch1.

The catalysed reaction is S-ubiquitinyl-[E2 ubiquitin-conjugating enzyme]-L-cysteine + [acceptor protein]-L-lysine = [E2 ubiquitin-conjugating enzyme]-L-cysteine + N(6)-ubiquitinyl-[acceptor protein]-L-lysine.. It participates in protein modification; protein ubiquitination. Functionally, regulator of Notch signaling, a signaling pathway involved in cell-cell communications that regulates a broad spectrum of cell-fate determinations. Probably acts both as a positive and negative regulator of Notch, depending on the developmental and cell context. Functions as a ubiquitin ligase protein in vivo, mediating ubiquitination and promoting degradation of MEKK1, suggesting that it may regulate the Notch pathway via some ubiquitin ligase activity. This chain is E3 ubiquitin-protein ligase DTX1 (dtx1), found in Xenopus laevis (African clawed frog).